Consider the following 204-residue polypeptide: Inner membrane-spanning protein YciB (204 aa).

A run of 5 helical transmembrane segments spans residues 48–68 (ILFA…LYFF), 73–93 (FESM…ATLM), 102–122 (WKPT…QLFT), 147–167 (GAWI…AYAF), and 170–190 (AVWV…FVVG).

It belongs to the YciB family.

It is found in the cell inner membrane. Functionally, plays a role in cell envelope biogenesis, maintenance of cell envelope integrity and membrane homeostasis. The sequence is that of Inner membrane-spanning protein YciB from Nitrosococcus oceani (strain ATCC 19707 / BCRC 17464 / JCM 30415 / NCIMB 11848 / C-107).